The chain runs to 270 residues: Undecaprenyl-diphosphatase 1 (270 aa).

The next 7 membrane-spanning stretches (helical) occupy residues tyrosine 5–isoleucine 25, isoleucine 42–isoleucine 62, phenylalanine 89–phenylalanine 109, leucine 117–isoleucine 137, phenylalanine 192–isoleucine 212, threonine 220–leucine 240, and glycine 250–leucine 270.

This sequence belongs to the UppP family.

The protein resides in the cell membrane. The enzyme catalyses di-trans,octa-cis-undecaprenyl diphosphate + H2O = di-trans,octa-cis-undecaprenyl phosphate + phosphate + H(+). Functionally, catalyzes the dephosphorylation of undecaprenyl diphosphate (UPP). Confers resistance to bacitracin. The polypeptide is Undecaprenyl-diphosphatase 1 (Bacillus cereus (strain ATCC 14579 / DSM 31 / CCUG 7414 / JCM 2152 / NBRC 15305 / NCIMB 9373 / NCTC 2599 / NRRL B-3711)).